Reading from the N-terminus, the 152-residue chain is Ubiquitin-conjugating enzyme E2 A (152 aa).

The 147-residue stretch at 4–150 (PARRRLMRDF…VSAIVEQSWR (147 aa)) folds into the UBC core domain. The Glycyl thioester intermediate role is filled by Cys88. The residue at position 120 (Ser120) is a Phosphoserine; by CDK9.

It belongs to the ubiquitin-conjugating enzyme family. In terms of assembly, interacts with RAD18 and WAC. Interacts with RFPL4A and CCNB1. Post-translationally, phosphorylation at Ser-120 by CDK9 increases activity towards histone H2B.

The protein localises to the late endosome. Its subcellular location is the lysosome. The catalysed reaction is S-ubiquitinyl-[E1 ubiquitin-activating enzyme]-L-cysteine + [E2 ubiquitin-conjugating enzyme]-L-cysteine = [E1 ubiquitin-activating enzyme]-L-cysteine + S-ubiquitinyl-[E2 ubiquitin-conjugating enzyme]-L-cysteine.. It functions in the pathway protein modification; protein ubiquitination. Its function is as follows. E2 ubiquitin-conjugating enzyme that accepts ubiquitin from the ubiquitin-activating enzyme E1 and transfers it to a E3 ubiquitin-protein ligase. In vitro catalyzes 'Lys-11', as well as 'Lys-48'-linked polyubiquitination. Together with the E3 enzyme BRE1 (RNF20 and/or RNF40), plays a role in transcription regulation by catalyzing the monoubiquitination of histone H2B at 'Lys-120' to form H2BK120ub1. H2BK120ub1 gives a specific tag for epigenetic transcriptional activation, elongation by RNA polymerase II, telomeric silencing, and is also a prerequisite for H3K4me and H3K79me formation. Involved in mitophagy by acting as a E2 ubiquitin-conjugating enzyme for PRKN. In association with the E3 enzyme UBR4, is involved in N-end rule-dependent protein degradation. In association with the E3 ubiquitin-protein ligase complex SIFI, inhibits the mitochondrial stress response by acting as a E2 ubiquitin-conjugating enzyme for UBR4 and KCMF1. This Homo sapiens (Human) protein is Ubiquitin-conjugating enzyme E2 A.